A 459-amino-acid polypeptide reads, in one-letter code: Transcriptional coactivator YAP1 (459 aa).

Phosphoserine; by LATS1 and LATS2 is present on residues serine 21, serine 69, serine 87, and serine 119. Disordered regions lie at residues 51–88 (LPDS…AHSS) and 103–129 (SGMA…VPLP). WW domains lie at 126–159 (VPLP…DPRK) and 186–219 (GPLP…DPRL). Disordered stretches follow at residues 231–254 (TQSA…MGGN) and 307–364 (PTSM…SSYS). Residues 247 to 459 (HGGVMGGNNQ…IDKESFLTWL (213 aa)) are transactivation domain. Polar residues-rich tracts occupy residues 307-347 (PTSM…SGTY) and 355-364 (DSGLSMSSYS).

Belongs to the YAP1 family. Phosphorylated by lats1 and lats2; leading to cytoplasmic translocation and inactivation. In terms of tissue distribution, ubiquitously expressed throughout development.

It is found in the cytoplasm. Its subcellular location is the nucleus. It localises to the cell junction. The protein localises to the tight junction. The protein resides in the cell membrane. In terms of biological role, transcriptional regulator which can act both as a coactivator and a corepressor and is the critical downstream regulatory target in the Hippo signaling pathway that plays a pivotal role in organ size control and tumor suppression by restricting proliferation and promoting apoptosis. Plays a key role in tissue tension and 3D tissue shape by regulating cortical actomyosin network formation. This chain is Transcriptional coactivator YAP1, found in Oryzias latipes (Japanese rice fish).